The chain runs to 126 residues: Scygonadin (126 aa).

Positions 1–24 (MRSSLLLGLTVVVLLGVIVPPCMA) are cleaved as a signal peptide.

In terms of tissue distribution, expressed in the ejaculatory ducts of mature males. Not detected in the ejaculatory ducts of immature males. Not detected in hepatopancreas, female reproductive tract, eyes, exoskeleton, subcuticular epithelia, heart, gills, stomach, muscle and hemocytes.

It is found in the secreted. Functionally, has antibacterial activity against the Gram-positive bacterium M.luteus with an IC(90) of 125ug/ml. Has weak antibacterial activity against the Gram-negative bacterium A.hydrophila. This chain is Scygonadin, found in Scylla serrata (Mud crab).